A 736-amino-acid chain; its full sequence is Centrosomal protein kizuna (736 aa).

A coiled-coil region spans residues 10–35; sequence HRAMKLQRNLRHCEGKRLELERELFQ. Residues 192–208 are compositionally biased toward polar residues; the sequence is NTSFQLSQKMPVTSVAS. Disordered stretches follow at residues 192–238, 279–305, 323–348, and 642–690; these read NTSF…SAQL, SFTHANPSGASPDACDYINNQTSDKHS, EDKQCLDSSSDLTVSISESEDDSYPP, and TVEE…NMST. Positions 210 to 219 are enriched in basic and acidic residues; the sequence is EDGRTHRAQI. Over residues 328–339 the composition is skewed to polar residues; it reads LDSSSDLTVSIS. Residues 658-668 show a composition bias toward low complexity; sequence SETSFSSSEKS. Positions 678-690 are enriched in polar residues; it reads IQPNYMKSNNMST.

Belongs to the kizuna family.

It localises to the cytoplasm. Its subcellular location is the cytoskeleton. It is found in the microtubule organizing center. The protein resides in the centrosome. The protein localises to the cilium basal body. Centrosomal protein required for establishing a robust mitotic centrosome architecture that can endure the forces that converge on the centrosomes during spindle formation. Required for stabilizing the expanded pericentriolar material around the centriole. The chain is Centrosomal protein kizuna (kiz) from Xenopus laevis (African clawed frog).